The chain runs to 340 residues: MEF2 transcription factor homolog (340 aa).

One can recognise an MADS-box domain in the interval 1–61; it reads MGRKKIQITR…NKLFQYASTD (61 aa). 4 disordered regions span residues 90 to 112, 193 to 217, 258 to 283, and 312 to 340; these read RKEG…TSPV, NQRN…LDFP, LQQR…NGTS, and PNTY…QQLT. The span at 200 to 211 shows a compositional bias: low complexity; that stretch reads SSTSVAPSSSSS. A compositionally biased stretch (polar residues) spans 258-268; sequence LQQRPVSQPAP. The span at 269 to 283 shows a compositional bias: low complexity; it reads SISNSSTNGISNGTS. The span at 318 to 332 shows a compositional bias: basic and acidic residues; the sequence is MEPHSPPEKRPRITT.

Belongs to the MEF2 family. As to quaternary structure, interacts with histone deacetylase hda-4 isoform b.

It is found in the nucleus. Functionally, transcription regulator. Binds specifically to the MEF2 element, 5'-[TC]TA[AT][AT][AT][AT]TA[AG]-3' in the regulatory elements of target genes, such as chemoreceptors str-1 and srh-234. Involved in transduction of sensory signals, together with egl-4, kin-29 and hda-4; binding to histone deacetylase hda-4 enables negative modulation of chemoreceptor gene expression in chemosensory neurons. In response to starvation, negatively modulates expression of chemoreceptor srh-234 in ADL sensory neurons, acting in concert with basic helix-loop-helix (bHLH) transcription factors. Plays a role in regulating muscle sensitivity to acetylcholine (ACh) and the magnitude of presynaptic ACh release via a retrograde signal, perhaps by indirectly decreasing Ras-related protein Rab-3 activity. The sequence is that of MEF2 transcription factor homolog from Caenorhabditis elegans.